A 129-amino-acid polypeptide reads, in one-letter code: Cytochrome c3 (129 aa).

Positions 1–22 are cleaved as a signal peptide; it reads MRKLFFCGVLALAVAFALPVVA. 16 residues coordinate heme c: H44, H47, C52, C55, H56, H57, C68, C73, H74, H92, C101, C104, H105, C122, C127, and H128.

Binds 4 heme c groups per subunit.

It localises to the periplasm. Its function is as follows. Participates in sulfate respiration coupled with phosphorylation by transferring electrons from the enzyme dehydrogenase to ferredoxin. This is Cytochrome c3 from Nitratidesulfovibrio vulgaris (strain ATCC 29579 / DSM 644 / CCUG 34227 / NCIMB 8303 / VKM B-1760 / Hildenborough) (Desulfovibrio vulgaris).